The following is a 470-amino-acid chain: Sulfate adenylyltransferase subunit 1 (470 aa).

The 217-residue stretch at 22–238 folds into the tr-type G domain; it reads KELLRFITCG…ETIKIDYAYT (217 aa). The G1 stretch occupies residues 31–38; it reads GSVDDGKS. A GTP-binding site is contributed by 31–38; the sequence is GSVDDGKS. Residues 89–93 form a G2 region; the sequence is GITID. The G3 stretch occupies residues 110–113; that stretch reads DTPG. Residues 110–114 and 165–168 each bind GTP; these read DTPGH and NKMD. Positions 165 to 168 are G4; sequence NKMD. The interval 202-204 is G5; that stretch reads SAL.

It belongs to the TRAFAC class translation factor GTPase superfamily. Classic translation factor GTPase family. CysN/NodQ subfamily. Heterodimer composed of CysD, the smaller subunit, and CysN.

It carries out the reaction sulfate + ATP + H(+) = adenosine 5'-phosphosulfate + diphosphate. It participates in sulfur metabolism; hydrogen sulfide biosynthesis; sulfite from sulfate: step 1/3. With CysD forms the ATP sulfurylase (ATPS) that catalyzes the adenylation of sulfate producing adenosine 5'-phosphosulfate (APS) and diphosphate, the first enzymatic step in sulfur assimilation pathway. APS synthesis involves the formation of a high-energy phosphoric-sulfuric acid anhydride bond driven by GTP hydrolysis by CysN coupled to ATP hydrolysis by CysD. In Francisella tularensis subsp. tularensis (strain SCHU S4 / Schu 4), this protein is Sulfate adenylyltransferase subunit 1.